Here is a 335-residue protein sequence, read N- to C-terminus: 4-hydroxythreonine-4-phosphate dehydrogenase (335 aa).

Residues histidine 135 and threonine 136 each contribute to the substrate site. A divalent metal cation-binding residues include histidine 165, histidine 210, and histidine 265. The substrate site is built by lysine 273, asparagine 282, and arginine 291.

The protein belongs to the PdxA family. Homodimer. Zn(2+) serves as cofactor. Mg(2+) is required as a cofactor. Requires Co(2+) as cofactor.

It localises to the cytoplasm. The catalysed reaction is 4-(phosphooxy)-L-threonine + NAD(+) = 3-amino-2-oxopropyl phosphate + CO2 + NADH. Its pathway is cofactor biosynthesis; pyridoxine 5'-phosphate biosynthesis; pyridoxine 5'-phosphate from D-erythrose 4-phosphate: step 4/5. Functionally, catalyzes the NAD(P)-dependent oxidation of 4-(phosphooxy)-L-threonine (HTP) into 2-amino-3-oxo-4-(phosphooxy)butyric acid which spontaneously decarboxylates to form 3-amino-2-oxopropyl phosphate (AHAP). This chain is 4-hydroxythreonine-4-phosphate dehydrogenase, found in Saccharophagus degradans (strain 2-40 / ATCC 43961 / DSM 17024).